Consider the following 282-residue polypeptide: NADPH-dependent 7-cyano-7-deazaguanine reductase (282 aa).

Residue 88 to 90 (IES) participates in substrate binding. 90 to 91 (SK) is an NADPH binding site. C190 serves as the catalytic Thioimide intermediate. Catalysis depends on D197, which acts as the Proton donor. 229-230 (HE) is a binding site for substrate. Residue 258–259 (RG) coordinates NADPH.

This sequence belongs to the GTP cyclohydrolase I family. QueF type 2 subfamily. Homodimer.

It is found in the cytoplasm. It carries out the reaction 7-aminomethyl-7-carbaguanine + 2 NADP(+) = 7-cyano-7-deazaguanine + 2 NADPH + 3 H(+). Its pathway is tRNA modification; tRNA-queuosine biosynthesis. In terms of biological role, catalyzes the NADPH-dependent reduction of 7-cyano-7-deazaguanine (preQ0) to 7-aminomethyl-7-deazaguanine (preQ1). This Salmonella paratyphi B (strain ATCC BAA-1250 / SPB7) protein is NADPH-dependent 7-cyano-7-deazaguanine reductase.